The primary structure comprises 247 residues: MSTLVLLRHGESVWNAEGLFTGWVDVDLSPKGEEEARRGGRLLAEAGIRPDVVHTSLLKRAIRTANIALEEAGLHWIPVKRSWRLNERHYGALQGKNKAQTRAEFGDEQFMIWRRSYDTPPPPLAEDSEFSQHNDPRYATLPPELMPRTECLADVVRRMLPYWYDAIIPDLAAGRTVLVAAHGNSLRALVKHLDNIDDKSIAGLNIPTGIPLVYELNDDFTPRKTGGEYLDPEAAKEAIEAVKNQGK.

Residues 8 to 15, 21 to 22, arginine 60, 87 to 90, lysine 98, 114 to 115, and 183 to 184 contribute to the substrate site; these read RHGESVWN, TG, ERHY, RR, and GN. Histidine 9 functions as the Tele-phosphohistidine intermediate in the catalytic mechanism. The Proton donor/acceptor role is filled by glutamate 87.

This sequence belongs to the phosphoglycerate mutase family. BPG-dependent PGAM subfamily.

The catalysed reaction is (2R)-2-phosphoglycerate = (2R)-3-phosphoglycerate. It participates in carbohydrate degradation; glycolysis; pyruvate from D-glyceraldehyde 3-phosphate: step 3/5. Its function is as follows. Catalyzes the interconversion of 2-phosphoglycerate and 3-phosphoglycerate. The protein is 2,3-bisphosphoglycerate-dependent phosphoglycerate mutase of Thermobifida fusca (strain YX).